A 456-amino-acid polypeptide reads, in one-letter code: Tyrosinase-like protein 2 (456 aa).

A signal peptide spans 1 to 22; the sequence is MNTMALFGKVILLQFLIGVGFC. Histidine 145, histidine 154, histidine 163, histidine 295, histidine 299, and histidine 322 together coordinate Cu cation.

It depends on Cu(2+) as a cofactor. As to expression, prismatic layer of shell (at protein level).

Its subcellular location is the secreted. The polypeptide is Tyrosinase-like protein 2 (Margaritifera margaritifera (Freshwater pearl mussel)).